The chain runs to 1100 residues: Regulator of nonsense transcripts 1 (1100 aa).

The segment covering 42–53 (SQTQTQGQTQSQ) has biased composition (low complexity). Residues 42-67 (SQTQTQGQTQSQLDNQVNGPDGVLPN) form a disordered region. Residues 94–251 (TKDLPVHACS…NKLEELWKEN (158 aa)) form the Upf1 CH-rich domain. Zn(2+) contacts are provided by cysteine 102, cysteine 105, cysteine 116, serine 119, cysteine 124, histidine 134, histidine 138, cysteine 144, cysteine 162, cysteine 165, cysteine 188, and cysteine 192. The C3H stretch occupies residues 102–134 (CSYCGIHDPACVVYCNTSKKWFCNGRGNTSGSH). The segment at 116–144 (CNTSKKWFCNGRGNTSGSHIVNHLVRAKC) is CC/SHH/C. The tract at residues 162 to 192 (CYNCGCRNVFLLGFIPAKADSVVVLLCRQPC) is C4. Residues glutamine 455, 475–479 (GTGKT), glutamine 645, tyrosine 682, and glutamate 813 contribute to the ATP site. The tract at residues 978 to 1065 (LGQVNGPAAG…QPELSQDSYL (88 aa)) is disordered. Low complexity predominate over residues 982 to 993 (NGPAAGRGAPKG). A compositionally biased stretch (polar residues) spans 1012-1063 (SGQPNMPNSQASQDLVSQPFSQGPLTQGYITMSQPSQMSQPGLSQPELSQDS).

This sequence belongs to the DNA2/NAM7 helicase family.

It is found in the cytoplasm. It localises to the P-body. The protein localises to the nucleus. Its subcellular location is the perinuclear region. Its function is as follows. RNA-dependent helicase and ATPase required for nonsense-mediated decay (NMD) of mRNAs containing premature stop codons. Is recruited to mRNAs upon translation termination and undergoes a cycle of phosphorylation and dephosphorylation; its phosphorylation appears to be a key step in NMD. The formation of an upf1-upf2-upf3 surveillance complex is believed to activate NMD. The protein is Regulator of nonsense transcripts 1 of Danio rerio (Zebrafish).